A 1387-amino-acid chain; its full sequence is Kinesin-like protein KIF15-B (1387 aa).

A Kinesin motor domain is found at 26–364 (AIKVFVRIRP…LQFAQRAKLI (339 aa)). 110–117 (GQTGSGKT) lines the ATP pocket. A coiled-coil region spans residues 369 to 1383 (VVNEDTQGNV…NLFLKETKKC (1015 aa)). Residues 1138 to 1387 (NSPVVLAQTP…KETKKCEHCD (250 aa)) form a necessary for its targeting to microtubule minus ends region.

The protein belongs to the TRAFAC class myosin-kinesin ATPase superfamily. Kinesin family. KLP2 subfamily. In terms of assembly, homodimer. Dimerization is required for targeting to microtubule minus ends. Found in a complex with tpx2 and microtubules. Its association with microtubules and targeting to microtubule minus ends requires tpx2. As to expression, strongly expressed in testis and weakly in lung (at protein level).

The protein localises to the cytoplasm. It localises to the cytoskeleton. The protein resides in the microtubule organizing center. Its subcellular location is the centrosome. It is found in the spindle. The protein localises to the spindle pole. Plus-end directed kinesin-like motor enzyme involved in mitotic spindle assembly. Required for centrosome separation and maintenance of spindle bipolarity during mitosis. The protein is Kinesin-like protein KIF15-B (kif15-b) of Xenopus laevis (African clawed frog).